Here is a 235-residue protein sequence, read N- to C-terminus: MLQITPIPALSDNYIWILQKECQAIIVDPAEAQAVFAFLAKHQLNPTAILLTHNHHDHTDGVAGLVAQFPDMLIYGSEEVSQFANQIVYPEQQFELLGLKVRVIESAGHTAQHISYLVDNEYLFCGDALFSGGCGRVFTGDYQAQFDALQRFKALPDFVKVYAGHEYTQSNLKFAEAVMATSCSLMEHQERADILRSQHKPTLPSTIGVEKQINPFMQAVTLDEFIILRQKKDNF.

The Zn(2+) site is built by histidine 53, histidine 55, aspartate 57, histidine 58, histidine 109, aspartate 127, and histidine 165.

Belongs to the metallo-beta-lactamase superfamily. Glyoxalase II family. As to quaternary structure, monomer. Requires Zn(2+) as cofactor.

It carries out the reaction an S-(2-hydroxyacyl)glutathione + H2O = a 2-hydroxy carboxylate + glutathione + H(+). Its pathway is secondary metabolite metabolism; methylglyoxal degradation; (R)-lactate from methylglyoxal: step 2/2. Functionally, thiolesterase that catalyzes the hydrolysis of S-D-lactoyl-glutathione to form glutathione and D-lactic acid. This Glaesserella parasuis serovar 5 (strain SH0165) (Haemophilus parasuis) protein is Hydroxyacylglutathione hydrolase.